The chain runs to 339 residues: Transcription factor IIIA (339 aa).

C2H2-type zinc fingers lie at residues F12–H36, F42–H66, C72–H97, Y104–H128, F134–H158, Y161–H187, V190–H212, Y219–H244, and F250–H274. The disordered stretch occupies residues F271–K339. Over residues K299 to P309 the composition is skewed to basic residues. A compositionally biased stretch (polar residues) spans Q311–D323.

It localises to the nucleus. Functionally, involved in ribosomal large subunit biogenesis. Interacts with the internal control region (ICR) of approximately 50 bases within the 5S RNA genes, is required for correct transcription of these genes by RNA polymerase III. Also binds the transcribed 5S RNA's. The chain is Transcription factor IIIA (gtf3a) from Anaxyrus americanus (American toad).